The chain runs to 168 residues: Cytochrome c-type biogenesis protein CcmE (168 aa).

The Cytoplasmic segment spans residues 1-7 (MTRKKRR). The chain crosses the membrane as a helical; Signal-anchor for type II membrane protein span at residues 8-28 (LYMLGLALLGLGTATALTLSA). The Periplasmic portion of the chain corresponds to 29–168 (FEENIVFFYS…KVHATTTLKP (140 aa)). Heme contacts are provided by His-122 and Tyr-126. Residues 149–168 (SIYTPADSDDKVHATTTLKP) are disordered.

This sequence belongs to the CcmE/CycJ family.

The protein localises to the cell inner membrane. Its function is as follows. Heme chaperone required for the biogenesis of c-type cytochromes. Transiently binds heme delivered by CcmC and transfers the heme to apo-cytochromes in a process facilitated by CcmF and CcmH. The sequence is that of Cytochrome c-type biogenesis protein CcmE from Rhodospirillum centenum (strain ATCC 51521 / SW).